Reading from the N-terminus, the 435-residue chain is Trigger factor (435 aa).

Residues aspartate 161 to proline 246 form the PPIase FKBP-type domain.

It belongs to the FKBP-type PPIase family. Tig subfamily.

The protein localises to the cytoplasm. It carries out the reaction [protein]-peptidylproline (omega=180) = [protein]-peptidylproline (omega=0). Its function is as follows. Involved in protein export. Acts as a chaperone by maintaining the newly synthesized protein in an open conformation. Functions as a peptidyl-prolyl cis-trans isomerase. This chain is Trigger factor, found in Psychromonas ingrahamii (strain DSM 17664 / CCUG 51855 / 37).